The sequence spans 702 residues: Polyphosphate kinase (702 aa).

N55 lines the ATP pocket. Residues R389 and R419 each contribute to the Mg(2+) site. H449 acts as the Phosphohistidine intermediate in catalysis. Y482, R578, and H606 together coordinate ATP.

The protein belongs to the polyphosphate kinase 1 (PPK1) family. It depends on Mg(2+) as a cofactor. An intermediate of this reaction is the autophosphorylated ppk in which a phosphate is covalently linked to a histidine residue through a N-P bond.

It carries out the reaction [phosphate](n) + ATP = [phosphate](n+1) + ADP. Its function is as follows. Catalyzes the reversible transfer of the terminal phosphate of ATP to form a long-chain polyphosphate (polyP). The polypeptide is Polyphosphate kinase (Bacillus cereus (strain ATCC 14579 / DSM 31 / CCUG 7414 / JCM 2152 / NBRC 15305 / NCIMB 9373 / NCTC 2599 / NRRL B-3711)).